An 85-amino-acid polypeptide reads, in one-letter code: Large ribosomal subunit protein bL31 (85 aa).

Positions 64–85 (KYGMSESQGAGGKGNAKKKDEK) are disordered.

The protein belongs to the bacterial ribosomal protein bL31 family. Type A subfamily. As to quaternary structure, part of the 50S ribosomal subunit.

In terms of biological role, binds the 23S rRNA. The polypeptide is Large ribosomal subunit protein bL31 (Acaryochloris marina (strain MBIC 11017)).